The chain runs to 178 residues: Protein modigliani (178 aa).

As to quaternary structure, probably homodimerizes. Component of the MTV complex, composed of moi/modigliani, tea and ver/verrocchio. Interacts with ver/verrochio and tea (via C-terminus); the interactions are direct and require fully intact moi/modigliani and ver/verrocchio. The MTV complex is recruited to telomeres by the HipHop-HOAP complex, consisting of HipHop, cav/HOAP and Su(var)205/HP1 to form the terminin telomere-capping complex. Interacts with cav/HOAP and Su(var)205/HP1; the interactions are direct. Probably interacts with peo (via N-terminus and UBC domain).

It is found in the nucleus. Its subcellular location is the chromosome. The protein localises to the telomere. Part of the MTV complex that associates with the HipHop-HOAP complex to form the terminin telomere-capping complex involved in telomere maintenance and prevention of telomere fusion. Potentially functions downstream of mei-41/ATR. As part of the MTV complex binds single stranded DNA in a sequence-independent manner, protecting it from degradation. The protein is Protein modigliani of Drosophila melanogaster (Fruit fly).